Consider the following 505-residue polypeptide: Maturase K (505 aa).

It belongs to the intron maturase 2 family. MatK subfamily.

It is found in the plastid. Its subcellular location is the chloroplast. Functionally, usually encoded in the trnK tRNA gene intron. Probably assists in splicing its own and other chloroplast group II introns. This is Maturase K from Rhizophora stylosa (Bakau).